The primary structure comprises 572 residues: Arginine--tRNA ligase (572 aa).

The 'HIGH' region signature appears at 122 to 132 (PNLAKEMHVGH).

Belongs to the class-I aminoacyl-tRNA synthetase family. Monomer.

The protein resides in the cytoplasm. It catalyses the reaction tRNA(Arg) + L-arginine + ATP = L-arginyl-tRNA(Arg) + AMP + diphosphate. This is Arginine--tRNA ligase from Neisseria meningitidis serogroup C / serotype 2a (strain ATCC 700532 / DSM 15464 / FAM18).